We begin with the raw amino-acid sequence, 153 residues long: UPF0756 membrane protein LSL_0936 (153 aa).

The next 5 helical transmembrane spans lie at 4–24, 26–46, 51–71, 86–106, and 116–136; these read WIFL…SLLI, GAVV…YPVI, INWG…TGQI, WIAV…VNLL, and LVIG…GPVI.

This sequence belongs to the UPF0756 family.

Its subcellular location is the cell membrane. In Ligilactobacillus salivarius (strain UCC118) (Lactobacillus salivarius), this protein is UPF0756 membrane protein LSL_0936.